The sequence spans 442 residues: ATP-dependent protease ATPase subunit HslU (442 aa).

ATP is bound by residues Ile-18, 60–65 (GVGKTE), Asp-255, Glu-320, and Arg-392.

The protein belongs to the ClpX chaperone family. HslU subfamily. As to quaternary structure, a double ring-shaped homohexamer of HslV is capped on each side by a ring-shaped HslU homohexamer. The assembly of the HslU/HslV complex is dependent on binding of ATP.

The protein localises to the cytoplasm. In terms of biological role, ATPase subunit of a proteasome-like degradation complex; this subunit has chaperone activity. The binding of ATP and its subsequent hydrolysis by HslU are essential for unfolding of protein substrates subsequently hydrolyzed by HslV. HslU recognizes the N-terminal part of its protein substrates and unfolds these before they are guided to HslV for hydrolysis. The protein is ATP-dependent protease ATPase subunit HslU of Shewanella putrefaciens (strain CN-32 / ATCC BAA-453).